Reading from the N-terminus, the 593-residue chain is MSQALNFFVSSSSRSPATFTISRPSVFPSTGSLRLLVKKSLRTLVVEASSAAASDLDEPQSSPVLVSENGSGGVLSSATQEYGRNAAPGTDSSSIEVDTVTEAELKENGFRSTRRTKLICTIGPATCGFEQLERLAEGGMNVARINMCHGTREWHRMVIERLRRLNEEKGFAVAIMMDTEGSEIHMGDLGGASSAKAEDGEIWNFTVRSFDPPLPERTVTVNYDGFAEDVKVGDELLVDGGMVRFEVIEKIGPDVKCLCTDPGLLLPRANLTFWRDGKLVRERNAMLPTISSKDWLDIDFGIAEGVDFIAVSFVKSAEVIKHLKSYIQARARDSDISVIAKIESIDSLKNLEEIIQASDGAMVARGDLGAQIPLEQVPSEQQKIVQICRQLNRPVIVASQLLESMIEYPIPTRAEVADVSEAVRQRGDALMLSGESAMGQFPEKALTVLRSVSLRIERMWREQKRHEVIELPSIASSFSDSISEEICNSAAKMANNLEVDALFVYTKNGHMASLLSRCRPDCPIFAFTTTTSVRRRLNLQWGLMPFRLSFSDDMESNLNKTFSLLKARGMIKSGDLIIAVSDMLQSIQVMNVP.

The segment at 57–94 (DEPQSSPVLVSENGSGGVLSSATQEYGRNAAPGTDSSS) is disordered. Substrate is bound at residue arginine 144. K(+) is bound by residues asparagine 146, aspartate 178, and threonine 179. Residue 146–149 (NMCH) coordinates ATP. Residue glutamate 343 participates in Mg(2+) binding. Positions 366, 367, and 399 each coordinate substrate. Residue aspartate 367 coordinates Mg(2+).

Belongs to the pyruvate kinase family. Mg(2+) serves as cofactor. K(+) is required as a cofactor. In terms of tissue distribution, highest levels in roots. Also found in stems, leaves and flowers.

It localises to the plastid. The protein resides in the chloroplast. The catalysed reaction is pyruvate + ATP = phosphoenolpyruvate + ADP + H(+). Its pathway is carbohydrate degradation; glycolysis; pyruvate from D-glyceraldehyde 3-phosphate: step 5/5. This chain is Pyruvate kinase isozyme A, chloroplastic, found in Nicotiana tabacum (Common tobacco).